The chain runs to 318 residues: Probable pyridoxal 5'-phosphate synthase subunit PDX1.1 (318 aa).

Position 49 (Asp49) interacts with D-ribose 5-phosphate. Catalysis depends on Lys106, which acts as the Schiff-base intermediate with D-ribose 5-phosphate. Gly178 contributes to the D-ribose 5-phosphate binding site. Arg190 serves as a coordination point for D-glyceraldehyde 3-phosphate. D-ribose 5-phosphate is bound by residues Gly239 and 260–261; that span reads GS.

This sequence belongs to the PdxS/SNZ family.

The catalysed reaction is aldehydo-D-ribose 5-phosphate + D-glyceraldehyde 3-phosphate + L-glutamine = pyridoxal 5'-phosphate + L-glutamate + phosphate + 3 H2O + H(+). It participates in cofactor biosynthesis; pyridoxal 5'-phosphate biosynthesis. Catalyzes the formation of pyridoxal 5'-phosphate from ribose 5-phosphate (RBP), glyceraldehyde 3-phosphate (G3P) and ammonia. The ammonia is provided by PDX2. Can also use ribulose 5-phosphate and dihydroxyacetone phosphate as substrates, resulting from enzyme-catalyzed isomerization of RBP and G3P, respectively. Also plays an indirect role in resistance to singlet oxygen-generating photosensitizers. The protein is Probable pyridoxal 5'-phosphate synthase subunit PDX1.1 (PDX11) of Oryza sativa subsp. japonica (Rice).